The following is a 158-amino-acid chain: NAD(P)H-quinone oxidoreductase subunit J, chloroplastic (158 aa).

Belongs to the complex I 30 kDa subunit family. In terms of assembly, NDH is composed of at least 16 different subunits, 5 of which are encoded in the nucleus.

The protein resides in the plastid. It localises to the chloroplast thylakoid membrane. It carries out the reaction a plastoquinone + NADH + (n+1) H(+)(in) = a plastoquinol + NAD(+) + n H(+)(out). The catalysed reaction is a plastoquinone + NADPH + (n+1) H(+)(in) = a plastoquinol + NADP(+) + n H(+)(out). Its function is as follows. NDH shuttles electrons from NAD(P)H:plastoquinone, via FMN and iron-sulfur (Fe-S) centers, to quinones in the photosynthetic chain and possibly in a chloroplast respiratory chain. The immediate electron acceptor for the enzyme in this species is believed to be plastoquinone. Couples the redox reaction to proton translocation, and thus conserves the redox energy in a proton gradient. The chain is NAD(P)H-quinone oxidoreductase subunit J, chloroplastic from Cryptomeria japonica (Japanese cedar).